We begin with the raw amino-acid sequence, 204 residues long: Urease accessory protein UreG (204 aa).

Residue 12–19 participates in GTP binding; that stretch reads GPVGSGKT.

Belongs to the SIMIBI class G3E GTPase family. UreG subfamily. As to quaternary structure, homodimer. UreD, UreF and UreG form a complex that acts as a GTP-hydrolysis-dependent molecular chaperone, activating the urease apoprotein by helping to assemble the nickel containing metallocenter of UreC. The UreE protein probably delivers the nickel.

It localises to the cytoplasm. In terms of biological role, facilitates the functional incorporation of the urease nickel metallocenter. This process requires GTP hydrolysis, probably effectuated by UreG. The protein is Urease accessory protein UreG of Ectopseudomonas mendocina (strain ymp) (Pseudomonas mendocina).